The following is a 562-amino-acid chain: Malate synthase (562 aa).

Arg177 functions as the Proton acceptor in the catalytic mechanism. Catalysis depends on Asp463, which acts as the Proton donor. Positions 560-562 (SRL) match the Microbody targeting signal motif.

Belongs to the malate synthase family.

The protein localises to the glyoxysome. The catalysed reaction is glyoxylate + acetyl-CoA + H2O = (S)-malate + CoA + H(+). It participates in carbohydrate metabolism; glyoxylate cycle; (S)-malate from isocitrate: step 2/2. Functionally, does not seem to be essential for lipid utilization and gluconeogenesis in seedlings. This chain is Malate synthase, found in Arabidopsis thaliana (Mouse-ear cress).